The chain runs to 458 residues: MSSVATIKRNIVPPHLEVKGGRPLSGILKVSGAKNSSLALMAAALLTKEKLLIQNVPQLTDIEVMSEILRNLGAKLTKTNNSIEINSESIHNVELPYELVHSLRASFFCVGPLLTRLGEAKIPLPGGCNIGARPVDEHINGLKALGAEVEVINDVVKAKVSTKDKRLLGANITLKYPSVGATETILMASCLASGKTTISNPAREPEIQDLAKMLNSMGAKVFGAGTKRITILGVESLNGTSHCVIPDRIEAGTFLIAAAITRSPLIIGPVIPNHLSAVISKLKECGCSISQHGNHHLKIIPREISGVDITTSPFPGFPTDLQAPFMSLMATAKGSSKIKERVFEKRMQHVLELNKMGACIYLENNTAYIKGVKELVGSNVEGGDLRSSAAIILACLSAKGNSIFTGLEHLDRGYEKLEEKLTNAGSNISRKFDQITSHSSFSNKIISEDNIDTQKNAA.

34–35 is a binding site for phosphoenolpyruvate; the sequence is KN. Residue R104 coordinates UDP-N-acetyl-alpha-D-glucosamine. The active-site Proton donor is the C128. C128 is modified (2-(S-cysteinyl)pyruvic acid O-phosphothioketal). UDP-N-acetyl-alpha-D-glucosamine contacts are provided by D320 and V342.

The protein belongs to the EPSP synthase family. MurA subfamily.

The protein resides in the cytoplasm. It catalyses the reaction phosphoenolpyruvate + UDP-N-acetyl-alpha-D-glucosamine = UDP-N-acetyl-3-O-(1-carboxyvinyl)-alpha-D-glucosamine + phosphate. The protein operates within cell wall biogenesis; peptidoglycan biosynthesis. In terms of biological role, cell wall formation. Adds enolpyruvyl to UDP-N-acetylglucosamine. The polypeptide is UDP-N-acetylglucosamine 1-carboxyvinyltransferase (Prochlorococcus marinus (strain NATL2A)).